The sequence spans 1255 residues: Mucin-1 (1255 aa).

An N-terminal signal peptide occupies residues 1–23 (MTPGTQSPFFLLLLLTVLTVVTG). A disordered region spans residues 23-1033 (GSGHASSTPG…PLTSSNHSTS (1011 aa)). Residues 24–1158 (SGHASSTPGG…SAQSGAGVPG (1135 aa)) lie on the Extracellular side of the membrane. The segment covering 38 to 54 (SATQRSSVPSSTEKNAV) has biased composition (polar residues). Positions 55 to 75 (SMTSSVLSSHSPGSGSSTTQG) are enriched in low complexity. A 1; approximate repeat occupies 61–80 (LSSHSPGSGSSTTQGQDVTL). Residues 81 to 100 (APATEPASGSAATWGQDVTS) form a 2; approximate repeat. Residues 90 to 102 (SAATWGQDVTSVP) show a composition bias toward polar residues. A run of 43 repeats spans residues 101–120 (VPVT…DVTS), 121–140 (APDN…GVTS), 141–160 (APDT…GVTS), 161–180 (APDT…GVTS), 181–200 (APDT…GVTS), 201–220 (APDT…GVTS), 221–240 (APDT…GVTS), 241–260 (APDT…GVTS), 261–280 (APDT…GVTS), 281–300 (APDT…GVTS), 301–320 (APDT…GVTS), 321–340 (APDT…GVTS), 341–360 (APDT…GVTS), 361–380 (APDT…GVTS), 381–400 (APDT…GVTS), 401–420 (APDT…GVTS), 421–440 (APDT…GVTS), 441–460 (APDT…GVTS), 461–480 (APDT…GVTS), 481–500 (APDT…GVTS), 501–520 (APDT…GVTS), 521–540 (APDT…GVTS), 541–560 (APDT…GVTS), 561–580 (APDT…GVTS), 581–600 (APDT…GVTS), 601–620 (APDT…GVTS), 621–640 (APDT…GVTS), 641–660 (APDT…GVTS), 661–680 (APDT…GVTS), 681–700 (APDT…GVTS), 701–720 (APDT…GVTS), 721–740 (APDT…GVTS), 741–760 (APDT…GVTS), 761–780 (APDT…GVTS), 781–800 (APDT…GVTS), 801–820 (APDT…GVTS), 821–840 (APDT…GVTS), 841–860 (APDT…GVTS), 861–880 (APDT…GVTS), 881–900 (APDT…GVTS), 901–920 (APDT…GVTS), 921–940 (APDT…GVTS), and 941–960 (APDN…NVTS). Residues 126 to 965 (PAPGSTAPPA…HNVTSASGSA (840 aa)) are 42 X 20 AA approximate tandem repeats of P-A-P-G-S-T-A-P-P-A-H-G-V-T-S-A-P-D-T-R. O-linked (GalNAc...) threonine glycosylation is found at threonine 131 and threonine 139. A glycan (O-linked (GalNAc...) serine) is linked at serine 140. An O-linked (GalNAc...) threonine glycan is attached at threonine 144. N-linked (GlcNAc...) asparagine glycosylation occurs at asparagine 957. Residues 960–970 (SASGSASGSAS) are compositionally biased toward low complexity. Residues 961 to 980 (ASGSASGSASTLVHNGTSAR) form a 46; approximate repeat. 2 stretches are compositionally biased toward polar residues: residues 971–993 (TLVH…TPFS) and 1001–1033 (TPTT…HSTS). An N-linked (GlcNAc...) asparagine glycan is attached at asparagine 975. The stretch at 981 to 1000 (ATTTPASKSTPFSIPSHHSD) is one 47; approximate repeat. One copy of the 48; approximate repeat lies at 1001–1020 (TPTTLASHSTKTDASSTHHS). 3 N-linked (GlcNAc...) asparagine glycosylation sites follow: asparagine 1029, asparagine 1055, and asparagine 1133. Residues 1039-1148 (GVSFFFLSFH…VSVSDVPFPF (110 aa)) form the SEA domain. Residues 1159-1181 (WGIALLVLVCVLVALAIVYLIAL) traverse the membrane as a helical segment. Topologically, residues 1182-1255 (AVCQCRRKNY…PAVAATSANL (74 aa)) are cytoplasmic. Residues cysteine 1184 and cysteine 1186 are each lipidated (S-palmitoyl cysteine). The tract at residues 1192–1228 (GQLDIFPARDTYHPMSEYPTYHTHGRYVPPSSTDRSP) is interaction with P53. At tyrosine 1203 the chain carries Phosphotyrosine; by PDGFR. The Interaction with GRB2 motif lies at 1203-1206 (YHPM). At tyrosine 1212 the chain carries Phosphotyrosine. Residues 1214-1237 (THGRYVPPSSTDRSPYEKVSAGNG) form a disordered region. Residue tyrosine 1218 is modified to Phosphotyrosine; by PDGFR. The interval 1223–1230 (STDRSPYE) is required for interaction with GSK3B. Threonine 1224 is subject to Phosphothreonine; by PKC/PRKCD. Serine 1227 is modified (phosphoserine; by GSK3-beta). Phosphotyrosine; by CSK, EGFR and SRC is present on tyrosine 1229. The short motif at 1229–1232 (YEKV) is the Interaction with SRC and ESR1 element. The segment at 1233 to 1241 (SAGNGGSSL) is required for interaction with beta- and gamma-catenins. Tyrosine 1243 carries the phosphotyrosine modification. A Required for interaction with AP1S2 motif is present at residues 1243-1246 (YTNP).

As to quaternary structure, the alpha subunit forms a tight, non-covalent heterodimeric complex with the proteolytically-released beta-subunit. Interaction, via the tandem repeat region, with domain 1 of ICAM1 is implicated in cell migration and metastases. Isoform 1 binds directly the SH2 domain of GRB2, and forms a MUC1/GRB2/SOS1 complex involved in RAS signaling. The cytoplasmic tail (MUC1CT) interacts with several proteins such as SRC, CTNNB1 and ERBs. Interaction with the SH2 domain of CSK decreases interaction with GSK3B. Interacts with CTNNB1/beta-catenin and JUP/gamma-catenin and promotes cell adhesion. Interaction with JUP/gamma-catenin is induced by heregulin. Binds PRKCD, ERBB2, ERBB3 and ERBB4. Heregulin (HRG) stimulates the interaction with ERBB2 and, to a much lesser extent, the interaction with ERBB3 and ERBB4. Interacts with P53 in response to DNA damage. Interacts with KLF4. Interacts with estrogen receptor alpha/ESR1, through its DNA-binding domain, and stimulates its transcription activity. Binds ADAM17. Isoform ZD forms disulfide-linked oligomers. In terms of processing, highly glycosylated (N- and O-linked carbohydrates and sialic acid). O-glycosylated to a varying degree on serine and threonine residues within each tandem repeat, ranging from mono- to penta-glycosylation. The average density ranges from about 50% in human milk to over 90% in T47D breast cancer cells. Further sialylation occurs during recycling. Membrane-shed glycoproteins from kidney and breast cancer cells have preferentially sialyated core 1 structures, while secreted forms from the same tissues display mainly core 2 structures. The O-glycosylated content is overlapping in both these tissues with terminal fucose and galactose, 2- and 3-linked galactose, 3- and 3,6-linked GalNAc-ol and 4-linked GlcNAc predominating. Differentially O-glycosylated in breast carcinomas with 3,4-linked GlcNAc. N-glycosylation consists of high-mannose, acidic complex-type and hybrid glycans in the secreted form MUC1/SEC, and neutral complex-type in the transmembrane form, MUC1/TM. Proteolytic cleavage in the SEA domain occurs in the endoplasmic reticulum by an autoproteolytic mechanism and requires the full-length SEA domain as well as requiring a Ser, Thr or Cys residue at the P + 1 site. Cleavage at this site also occurs on isoform MUC1/X but not on isoform MUC1/Y. Ectodomain shedding is mediated by ADAM17. Post-translationally, dual palmitoylation on cysteine residues in the CQC motif is required for recycling from endosomes back to the plasma membrane. In terms of processing, phosphorylated on tyrosines and serine residues in the C-terminal. Phosphorylation on tyrosines in the C-terminal increases the nuclear location of MUC1 and beta-catenin. Phosphorylation by PKC delta induces binding of MUC1 to beta-catenin/CTNNB1 and thus decreases the formation of the beta-catenin/E-cadherin complex. Src-mediated phosphorylation inhibits interaction with GSK3B. Src- and EGFR-mediated phosphorylation on Tyr-1229 increases binding to beta-catenin/CTNNB1. GSK3B-mediated phosphorylation on Ser-1227 decreases this interaction but restores the formation of the beta-cadherin/E-cadherin complex. On T-cell receptor activation, phosphorylated by LCK. PDGFR-mediated phosphorylation increases nuclear colocalization of MUC1CT and CTNNB1. The N-terminal sequence has been shown to begin at position 24 or 28. As to expression, expressed on the apical surface of epithelial cells, especially of airway passages, breast and uterus. Also expressed in activated and unactivated T-cells. Overexpressed in epithelial tumors, such as breast or ovarian cancer and also in non-epithelial tumor cells. Isoform Y is expressed in tumor cells only.

The protein resides in the apical cell membrane. Its subcellular location is the secreted. The protein localises to the cell membrane. It localises to the cytoplasm. It is found in the nucleus. Its function is as follows. The alpha subunit has cell adhesive properties. Can act both as an adhesion and an anti-adhesion protein. May provide a protective layer on epithelial cells against bacterial and enzyme attack. In terms of biological role, the beta subunit contains a C-terminal domain which is involved in cell signaling, through phosphorylations and protein-protein interactions. Modulates signaling in ERK, SRC and NF-kappa-B pathways. In activated T-cells, influences directly or indirectly the Ras/MAPK pathway. Promotes tumor progression. Regulates TP53-mediated transcription and determines cell fate in the genotoxic stress response. Binds, together with KLF4, the PE21 promoter element of TP53 and represses TP53 activity. This is Mucin-1 (MUC1) from Homo sapiens (Human).